The chain runs to 297 residues: uncharacterized protein (297 aa).

A run of 6 helical transmembrane segments spans residues 26–48, 80–102, 134–156, 185–205, 225–247, and 262–284; these read FVLH…IYAI, NIEL…AALF, LFKF…INLG, LGIF…AIVI, LVDT…VAAY, and LVAV…VELY.

It localises to the cell membrane. This is an uncharacterized protein from Archaeoglobus fulgidus (strain ATCC 49558 / DSM 4304 / JCM 9628 / NBRC 100126 / VC-16).